Consider the following 293-residue polypeptide: Elongation factor Ts (293 aa).

An involved in Mg(2+) ion dislocation from EF-Tu region spans residues 80-83; it reads TDFV.

Belongs to the EF-Ts family.

The protein resides in the cytoplasm. Its function is as follows. Associates with the EF-Tu.GDP complex and induces the exchange of GDP to GTP. It remains bound to the aminoacyl-tRNA.EF-Tu.GTP complex up to the GTP hydrolysis stage on the ribosome. The sequence is that of Elongation factor Ts from Paraburkholderia phytofirmans (strain DSM 17436 / LMG 22146 / PsJN) (Burkholderia phytofirmans).